We begin with the raw amino-acid sequence, 144 residues long: Large ribosomal subunit protein uL15 (144 aa).

Residues 1–54 form a disordered region; that stretch reads MRLNTLSPAEGSKKAGKRLGRGIGSGLGKTGGRGHKGQKSRSGGGVRRGFEGGQ. Positions 21 to 31 are enriched in gly residues; that stretch reads RGIGSGLGKTG.

This sequence belongs to the universal ribosomal protein uL15 family. In terms of assembly, part of the 50S ribosomal subunit.

In terms of biological role, binds to the 23S rRNA. This is Large ribosomal subunit protein uL15 from Salmonella arizonae (strain ATCC BAA-731 / CDC346-86 / RSK2980).